The following is a 98-amino-acid chain: UPF0213 protein in ldhD 5'region (98 aa).

Residues 7 to 84 enclose the GIY-YIG domain; sequence NGFYFYVLWC…KKQSRKEKLK (78 aa).

This sequence belongs to the UPF0213 family.

In Pediococcus acidilactici, this protein is UPF0213 protein in ldhD 5'region.